A 258-amino-acid polypeptide reads, in one-letter code: Proliferating cell nuclear antigen (258 aa).

The DNA-binding element occupies 61 to 80 (RCDHPVTLGMDLTSLSKILR). Residue Lys-127 forms a Glycyl lysine isopeptide (Lys-Gly) (interchain with G-Cter in SUMO) linkage. Lys-164 participates in a covalent cross-link: Glycyl lysine isopeptide (Lys-Gly) (interchain with G-Cter in SUMO); alternate. A Glycyl lysine isopeptide (Lys-Gly) (interchain with G-Cter in ubiquitin); alternate cross-link involves residue Lys-164.

Belongs to the PCNA family. As to quaternary structure, homotrimer. Interacts with RAD30. Interacts with MCM10. Interacts with UBP10. Sumoylated on Lys-164, and to a lesser extent on Lys-127 by the UBC9/SIZ1 complex during S-phase; which impairs ubiquitination and function in DNA repair. Post-translationally, monoubiquitinated on Lys-164 by the UBC2/RAD18 complex upon DNA damage, and then polyubiquitinated through 'Lys-63'-linkage by UBC13/MMS2. Ubiquitination is required for UBC2-mediated DNA repair. In terms of processing, lys-164 is deubiquitinated by UBP10.

The protein resides in the nucleus. Its function is as follows. This protein is an auxiliary protein of DNA polymerase delta and is involved in the control of eukaryotic DNA replication by increasing the polymerase's processibility during elongation of the leading strand. Involved in DNA repair. This is Proliferating cell nuclear antigen (POL30) from Saccharomyces cerevisiae (strain ATCC 204508 / S288c) (Baker's yeast).